The sequence spans 469 residues: Adenosylhomocysteinase (469 aa).

Positions 58, 133, and 195 each coordinate substrate. 196-198 (TTT) serves as a coordination point for NAD(+). Residues Lys225 and Asp229 each coordinate substrate. NAD(+)-binding positions include Asn230, 259 to 264 (GFGDVG), Glu282, Asn317, 338 to 340 (IGH), and Asn383.

Belongs to the adenosylhomocysteinase family. The cofactor is NAD(+).

It is found in the cytoplasm. It carries out the reaction S-adenosyl-L-homocysteine + H2O = L-homocysteine + adenosine. The protein operates within amino-acid biosynthesis; L-homocysteine biosynthesis; L-homocysteine from S-adenosyl-L-homocysteine: step 1/1. Its function is as follows. May play a key role in the regulation of the intracellular concentration of adenosylhomocysteine. This Rhodopseudomonas palustris (strain TIE-1) protein is Adenosylhomocysteinase.